The sequence spans 842 residues: GPI ethanolamine phosphate transferase 2 (842 aa).

An N-linked (GlcNAc...) asparagine glycan is attached at N186. Residues 409 to 429 (YNYPLLFIGCFLSIVITGTIY) traverse the membrane as a helical segment. N441 is a glycosylation site (N-linked (GlcNAc...) asparagine). Helical transmembrane passes span 442–462 (TSIL…SSFI) and 468–488 (FWWW…NFSS). N-linked (GlcNAc...) asparagine glycosylation occurs at N506. A helical membrane pass occupies residues 524 to 544 (GNIDALWWLNLITVTVVGLNL). The N-linked (GlcNAc...) asparagine glycan is linked to N551. A helical membrane pass occupies residues 554–574 (VSLLGFSDLLSMGLLSMITFL). An N-linked (GlcNAc...) asparagine glycan is attached at N578. 3 helical membrane-spanning segments follow: residues 615 to 635 (IHTA…AVLV), 698 to 718 (YLLA…QSGG), and 740 to 760 (IYVV…YWSF). The N-linked (GlcNAc...) asparagine glycan is linked to N771. 2 helical membrane passes run 783–803 (YPFI…CIIL) and 821–841 (MVWT…LLLL).

It belongs to the PIGG/PIGN/PIGO family. PIGG subfamily.

It localises to the endoplasmic reticulum membrane. The protein operates within glycolipid biosynthesis; glycosylphosphatidylinositol-anchor biosynthesis. Functionally, ethanolamine phosphate transferase involved in glycosylphosphatidylinositol-anchor biosynthesis. Transfers ethanolamine phosphate to the GPI second mannose. The protein is GPI ethanolamine phosphate transferase 2 (LAS21) of Candida glabrata (strain ATCC 2001 / BCRC 20586 / JCM 3761 / NBRC 0622 / NRRL Y-65 / CBS 138) (Yeast).